A 630-amino-acid chain; its full sequence is Eukaryotic translation initiation factor 2-alpha kinase 1 (630 aa).

Positions 1–40 (MQGGNSGVRKREEEGDGAGAVAAPPAIDFPAEGPDPEYDE) are disordered. The SIFI-degron motif lies at 85-104 (LRSRQVFKLLCQTFIKMGLL). One can recognise a Protein kinase domain in the interval 167 to 583 (FEELAILGKG…AIQLLQSELF (417 aa)). ATP-binding positions include 173–181 (LGKGGYGRV) and K196. The segment at 259 to 301 (DQEEDREQCGVKNDESSSSSIIFAEPTPEKEKRFGESDTENQN) is disordered. T285 bears the Phosphothreonine mark. The span at 285–294 (TPEKEKRFGE) shows a compositional bias: basic and acidic residues. One copy of the HRM 1 repeat lies at 410-415 (ACPYVM). The Proton acceptor role is filled by D442. Phosphothreonine; by autocatalysis is present on residues T486 and T488. T493 bears the Phosphothreonine mark. The HRM 2 repeat unit spans residues 552 to 557 (RCPVQA).

Belongs to the protein kinase superfamily. Ser/Thr protein kinase family. GCN2 subfamily. In terms of assembly, synthesized in an inactive form that binds to the N-terminal domain of CDC37. Has to be associated with a multiprotein complex containing Hsp90, CDC37 and PPP5C for maturation and activation by autophosphorylation. The phosphatase PPP5C modulates this activation. Homodimer; homodimerizes in presence of heme, forming a disulfide-linked inactive homodimer. Interacts with DELE1; binds both to full-length DELE1 and processed form of DELE1 (S-DELE1) in response to stress, leading to activate its protein kinase activity and trigger the integrated stress response (ISR). Activated by autophosphorylation; phosphorylated predominantly on serine and threonine residues, but also on tyrosine residues. Autophosphorylation at Thr-488 is required for kinase activation. The active autophosphorylated form apparently is largely refractory to cellular heme fluctuations. Post-translationally, ubiquitinated and degraded by the SIFI complex once the mitochondrial stress has been resolved, thereby providing stress response silencing. Within the SIFI complex, UBR4 initiates ubiquitin chain that are further elongated or branched by KCMF1.

It carries out the reaction L-seryl-[protein] + ATP = O-phospho-L-seryl-[protein] + ADP + H(+). The catalysed reaction is L-threonyl-[protein] + ATP = O-phospho-L-threonyl-[protein] + ADP + H(+). In normal conditions, the protein kinase activity is inhibited; inhibition is relieved by various stress conditions. Inhibited by heme: in presence of heme, forms a disulfide-linked inactive homodimer. Heme depletion relieves inhibition and stimulates kinase activity by autophosphorylation. Inhibited by the heme metabolites biliverdin and bilirubin. Induced by oxidative stress generated by arsenite treatment. Binding of nitric oxide (NO) to the heme iron in the N-terminal heme-binding domain activates the kinase activity, while binding of carbon monoxide (CO) suppresses kinase activity. Protein kinase activity is also activated upon binding to DELE1 in response to various stress, triggering the integrated stress response (ISR): activated by full-length DELE1 in response to iron deficiency, while it is activated by the processed form of DELE1 (S-DELE1) in response to mitochondrial stress. In terms of biological role, metabolic-stress sensing protein kinase that phosphorylates the alpha subunit of eukaryotic translation initiation factor 2 (EIF2S1/eIF-2-alpha) in response to various stress conditions. Key activator of the integrated stress response (ISR) required for adaptation to various stress, such as heme deficiency, oxidative stress, osmotic shock, mitochondrial dysfunction and heat shock. EIF2S1/eIF-2-alpha phosphorylation in response to stress converts EIF2S1/eIF-2-alpha in a global protein synthesis inhibitor, leading to a global attenuation of cap-dependent translation, while concomitantly initiating the preferential translation of ISR-specific mRNAs, such as the transcriptional activator ATF4, and hence allowing ATF4-mediated reprogramming. Acts as a key sensor of heme-deficiency: in normal conditions, binds hemin via a cysteine thiolate and histidine nitrogenous coordination, leading to inhibit the protein kinase activity. This binding occurs with moderate affinity, allowing it to sense the heme concentration within the cell: heme depletion relieves inhibition and stimulates kinase activity, activating the ISR. Thanks to this unique heme-sensing capacity, plays a crucial role to shut off protein synthesis during acute heme-deficient conditions. In red blood cells (RBCs), controls hemoglobin synthesis ensuring a coordinated regulation of the synthesis of its heme and globin moieties. It thereby plays an essential protective role for RBC survival in anemias of iron deficiency. Iron deficiency also triggers activation by full-length DELE1. Also activates the ISR in response to mitochondrial dysfunction: HRI/EIF2AK1 protein kinase activity is activated upon binding to the processed form of DELE1 (S-DELE1), thereby promoting the ATF4-mediated reprogramming. Also acts as an activator of mitophagy in response to mitochondrial damage: catalyzes phosphorylation of eIF-2-alpha (EIF2S1) following activation by S-DELE1, thereby promoting mitochondrial localization of EIF2S1, triggering PRKN-independent mitophagy. The protein is Eukaryotic translation initiation factor 2-alpha kinase 1 of Homo sapiens (Human).